Reading from the N-terminus, the 541-residue chain is Transmembrane protein 87A (541 aa).

Positions Met1–Ala26 are cleaved as a signal peptide. Topologically, residues Val27–Pro209 are lumenal. N-linked (GlcNAc...) asparagine glycosylation is found at Asn52, Asn109, Asn148, and Asn189. 2 disulfides stabilise this stretch: Cys65–Cys116 and Cys82–Cys416. A helical membrane pass occupies residues Leu210–Ile230. Topologically, residues Trp231 to Arg241 are cytoplasmic. The helical transmembrane segment at Ile242–Ala262 threads the bilayer. Topologically, residues Glu263–Arg293 are lumenal. Residues Leu294–Met314 traverse the membrane as a helical segment. Residues His315–Arg316 lie on the Cytoplasmic side of the membrane. The chain crosses the membrane as a helical span at residues Val317–Ile337. At Gly338 to Leu344 the chain is on the lumenal side. Residues Val345–Val365 traverse the membrane as a helical segment. Over Ser366–Ser384 the chain is Cytoplasmic. Residues Leu385 to Ile405 traverse the membrane as a helical segment. At Trp406–Glu422 the chain is on the lumenal side. The helical transmembrane segment at Leu423–Phe443 threads the bilayer. The Cytoplasmic segment spans residues Leu444–Glu541.

This sequence belongs to the LU7TM family. TMEM87 subfamily.

It localises to the cell membrane. It is found in the golgi apparatus membrane. In terms of biological role, potential monoatomic ion channel gated by mechanical force, implicated in normal touch sensitivity through the generation of mechanically activated currents. However, a direct channel activity is debated and an alternative could be that it functions as a chaperone for an unidentified mechanosensitive ion channel. Could also be involved in cell mechanosensitivity regulating cell adhesion and migration. May also be involved in retrograde transport from endosomes to the trans-Golgi network (TGN). This chain is Transmembrane protein 87A, found in Xenopus tropicalis (Western clawed frog).